A 173-amino-acid chain; its full sequence is Translation initiation factor IF-3 (173 aa).

Belongs to the IF-3 family. Monomer.

Its subcellular location is the cytoplasm. Its function is as follows. IF-3 binds to the 30S ribosomal subunit and shifts the equilibrium between 70S ribosomes and their 50S and 30S subunits in favor of the free subunits, thus enhancing the availability of 30S subunits on which protein synthesis initiation begins. The sequence is that of Translation initiation factor IF-3 from Caulobacter sp. (strain K31).